The following is a 320-amino-acid chain: o-succinylbenzoate synthase (320 aa).

Lys-133 serves as the catalytic Proton donor. Mg(2+) contacts are provided by Asp-161, Glu-190, and Asp-213. Lys-235 (proton acceptor) is an active-site residue.

This sequence belongs to the mandelate racemase/muconate lactonizing enzyme family. MenC type 1 subfamily. A divalent metal cation serves as cofactor.

It catalyses the reaction (1R,6R)-6-hydroxy-2-succinyl-cyclohexa-2,4-diene-1-carboxylate = 2-succinylbenzoate + H2O. Its pathway is quinol/quinone metabolism; 1,4-dihydroxy-2-naphthoate biosynthesis; 1,4-dihydroxy-2-naphthoate from chorismate: step 4/7. The protein operates within quinol/quinone metabolism; menaquinone biosynthesis. Functionally, converts 2-succinyl-6-hydroxy-2,4-cyclohexadiene-1-carboxylate (SHCHC) to 2-succinylbenzoate (OSB). This chain is o-succinylbenzoate synthase, found in Escherichia coli O157:H7.